The following is a 326-amino-acid chain: Serpentine receptor class gamma-14 (326 aa).

7 helical membrane-spanning segments follow: residues 36–56, 67–83, 115–135, 156–176, 204–224, 243–263, and 274–294; these read QIIY…TILW, FFTL…SILI, IIML…VLLV, LKYV…NIAI, FQLV…AITL, VIIS…SFFF, and GFSF…MICV.

It belongs to the nematode receptor-like protein srg family.

It is found in the membrane. The polypeptide is Serpentine receptor class gamma-14 (srg-14) (Caenorhabditis elegans).